The sequence spans 812 residues: MLMTTTTIAMSLSHDVIIAAAQRAARAIPPLWPLASSVAVNPFLGQASEPLEVAAARLRRASGIAVTMPRSWYAERLQSGEITEDDLQAAFQTAPAARRPPNVSALKHAIKVARPAPQAIPTVAELARDVTAIDWPGIVNERIGHWAAGYFDQGQALWAVGQSGGAYSTWRIIATHDLTPEIAGLAGFSQSVSDAPATAEDALVDCVARLGLSPDALDGYFHRLLTTLGGWGQVARYRLWQAELNGGTDACVTDLLAIRMLWEAALLHNGGSALVPGWQSAIAAYAAPVAASSDDVVDSILQEAAERAAQRKLNTVLAAPSSARLSRGRLTLQMAFCIDVRSEVFRRALESLDSGITTLGFAGFFGFGIGHRRFASDVVEARLPVLLSPGVVTCAGEPTPAANAAELSARITARAKRAWGRFKLAAISSFAFVEATGPIYIAKLLRDGLALARHHAPTDPAPRPAHELDLDTRLTMAARILKAMSFTSNFARLVVLAGHGAKVVNNPHASALHCGACGGYSGEVNAQLLASLLNDHQVRAGLAERGIVIPADTLFLAALHDTTTDAVTLFADDHPSPTHAQDLAQVTQWLAAAGALARGERALRLPRANRSQDIAHRARDWAEIRPEWALAGCQAFIAAPRSRSAGRDLAGRAFLHDYDWRCDHGFGVLELILTAPVVVASWISLQYYGSTVAPERFGAGNKLLHNVTGGIGVVEGNGGILRTGLPWQSVHDGERLIHEPLRLSVLIEAPTEAIGAILERHPQLRALFDNRWLHLFALDDEGRMARRYIGDLSWETYVGDASSQSNRASTLA.

Zn(2+) contacts are provided by Cys337, Asp339, His499, and Cys514.

This sequence belongs to the inorganic carbon transporter (TC 9.A.2) DabA family. Forms a complex with DabB. It depends on Zn(2+) as a cofactor.

Its subcellular location is the cell inner membrane. Part of an energy-coupled inorganic carbon pump. The protein is Probable inorganic carbon transporter subunit DabA of Xanthomonas oryzae pv. oryzae (strain KACC10331 / KXO85).